The following is a 122-amino-acid chain: UPF0102 protein Krad_1407 (122 aa).

This sequence belongs to the UPF0102 family.

The polypeptide is UPF0102 protein Krad_1407 (Kineococcus radiotolerans (strain ATCC BAA-149 / DSM 14245 / SRS30216)).